The primary structure comprises 308 residues: Aspartate carbamoyltransferase catalytic subunit (308 aa).

Carbamoyl phosphate is bound by residues Arg57 and Thr58. Residue Lys86 participates in L-aspartate binding. Carbamoyl phosphate-binding residues include Arg107, His135, and Gln138. L-aspartate contacts are provided by Arg168 and Arg229. The carbamoyl phosphate site is built by Leu268 and Pro269.

Belongs to the aspartate/ornithine carbamoyltransferase superfamily. ATCase family. In terms of assembly, heterooligomer of catalytic and regulatory chains.

It carries out the reaction carbamoyl phosphate + L-aspartate = N-carbamoyl-L-aspartate + phosphate + H(+). Its pathway is pyrimidine metabolism; UMP biosynthesis via de novo pathway; (S)-dihydroorotate from bicarbonate: step 2/3. In terms of biological role, catalyzes the condensation of carbamoyl phosphate and aspartate to form carbamoyl aspartate and inorganic phosphate, the committed step in the de novo pyrimidine nucleotide biosynthesis pathway. In Thermococcus gammatolerans (strain DSM 15229 / JCM 11827 / EJ3), this protein is Aspartate carbamoyltransferase catalytic subunit.